The chain runs to 306 residues: Homeobox protein HMX3 (306 aa).

Positions 95–181 (HTPRTEVPDK…DKKPCRKKKT (87 aa)) are disordered. Composition is skewed to basic and acidic residues over residues 117–143 (GERD…KSPE) and 153–174 (EEGK…PDKK). A DNA-binding region (homeobox) is located at residues 178–237 (KKKTRTVFSRSQVFQLESTFDMKRYLSSSERAGLAASLHLTETQVKIWFQNRRNKWKRQL).

This sequence belongs to the HMX homeobox family.

It is found in the nucleus. Its function is as follows. Transcription factor involved in specification of neuronal cell types and which is required for inner ear and hypothalamus development. Binds to the 5'-CAAGTG-3' core sequence. May act as a stage-specific inhibitor of anf1 in the anterior neural plate during the development. In Xenopus tropicalis (Western clawed frog), this protein is Homeobox protein HMX3 (hmx3).